A 231-amino-acid polypeptide reads, in one-letter code: Orotidine 5'-phosphate decarboxylase (231 aa).

Residues Asp-11, Lys-33, Asp-60–Thr-69, Thr-120, Arg-181, Gln-190, Gly-210, and Arg-211 each bind substrate. Lys-62 acts as the Proton donor in catalysis.

It belongs to the OMP decarboxylase family. Type 1 subfamily. As to quaternary structure, homodimer.

It catalyses the reaction orotidine 5'-phosphate + H(+) = UMP + CO2. Its pathway is pyrimidine metabolism; UMP biosynthesis via de novo pathway; UMP from orotate: step 2/2. Catalyzes the decarboxylation of orotidine 5'-monophosphate (OMP) to uridine 5'-monophosphate (UMP). This chain is Orotidine 5'-phosphate decarboxylase, found in Photobacterium profundum (strain SS9).